Reading from the N-terminus, the 579-residue chain is ATP-dependent lipid A-core flippase (579 aa).

4 consecutive transmembrane segments (helical) span residues 24–44, 61–81, 147–167, and 253–273; these read FLAAVVGYAIYAASSTALAEM, LMLPLFVIGMFAARGVGTFLG, LFVIGLVSYLLWTNWMLTLIF, and LLVALSLAGLVWLAMSPALMA. Residues 25 to 306 enclose the ABC transmembrane type-1 domain; it reads LAAVVGYAIY…LTEVNSTIQK (282 aa). Residues 338 to 573 form the ABC transporter domain; it reads VRFEGVRFRY…DGAYAALHQL (236 aa). Residue 372 to 379 participates in ATP binding; that stretch reads GRSGSGKS.

The protein belongs to the ABC transporter superfamily. Lipid exporter (TC 3.A.1.106) family. As to quaternary structure, homodimer.

It localises to the cell inner membrane. It catalyses the reaction ATP + H2O + lipid A-core oligosaccharideSide 1 = ADP + phosphate + lipid A-core oligosaccharideSide 2.. In terms of biological role, involved in lipopolysaccharide (LPS) biosynthesis. Translocates lipid A-core from the inner to the outer leaflet of the inner membrane. Transmembrane domains (TMD) form a pore in the inner membrane and the ATP-binding domain (NBD) is responsible for energy generation. The chain is ATP-dependent lipid A-core flippase from Chromohalobacter salexigens (strain ATCC BAA-138 / DSM 3043 / CIP 106854 / NCIMB 13768 / 1H11).